Reading from the N-terminus, the 487-residue chain is Cytochrome P450 2C5 (487 aa).

Residue cysteine 432 participates in heme binding.

This sequence belongs to the cytochrome P450 family. Requires heme as cofactor.

The protein resides in the endoplasmic reticulum membrane. The protein localises to the microsome membrane. The catalysed reaction is an organic molecule + reduced [NADPH--hemoprotein reductase] + O2 = an alcohol + oxidized [NADPH--hemoprotein reductase] + H2O + H(+). Its function is as follows. Cytochromes P450 are a group of heme-thiolate monooxygenases. In liver microsomes, this enzyme is involved in an NADPH-dependent electron transport pathway. It oxidizes a variety of structurally unrelated compounds, including steroids, fatty acids, and xenobiotics. This Oryctolagus cuniculus (Rabbit) protein is Cytochrome P450 2C5 (CYP2C5).